The sequence spans 148 residues: Large ribosomal subunit protein uL11 (148 aa).

Residues 89–108 (EKKKGSGAHKPGKEKVGQVT) are disordered.

It belongs to the universal ribosomal protein uL11 family. In terms of assembly, part of the ribosomal stalk of the 50S ribosomal subunit. Interacts with L10 and the large rRNA to form the base of the stalk. L10 forms an elongated spine to which L12 dimers bind in a sequential fashion forming a multimeric L10(L12)X complex. One or more lysine residues are methylated.

In terms of biological role, forms part of the ribosomal stalk which helps the ribosome interact with GTP-bound translation factors. In Anaeromyxobacter sp. (strain Fw109-5), this protein is Large ribosomal subunit protein uL11.